The sequence spans 422 residues: D-amino acid dehydrogenase (422 aa).

Residue V3–W17 participates in FAD binding.

This sequence belongs to the DadA oxidoreductase family. FAD serves as cofactor.

The enzyme catalyses a D-alpha-amino acid + A + H2O = a 2-oxocarboxylate + AH2 + NH4(+). The protein operates within amino-acid degradation; D-alanine degradation; NH(3) and pyruvate from D-alanine: step 1/1. Its function is as follows. Oxidative deamination of D-amino acids. The chain is D-amino acid dehydrogenase from Paramagnetospirillum magneticum (strain ATCC 700264 / AMB-1) (Magnetospirillum magneticum).